Consider the following 247-residue polypeptide: Phosphatidylserine decarboxylase proenzyme (247 aa).

Catalysis depends on serine 206, which acts as the Schiff-base intermediate with substrate; via pyruvic acid. Serine 206 carries the post-translational modification Pyruvic acid (Ser); by autocatalysis.

The protein belongs to the phosphatidylserine decarboxylase family. PSD-A subfamily. Heterodimer of a large membrane-associated beta subunit and a small pyruvoyl-containing alpha subunit. It depends on pyruvate as a cofactor. In terms of processing, is synthesized initially as an inactive proenzyme. Formation of the active enzyme involves a self-maturation process in which the active site pyruvoyl group is generated from an internal serine residue via an autocatalytic post-translational modification. Two non-identical subunits are generated from the proenzyme in this reaction, and the pyruvate is formed at the N-terminus of the alpha chain, which is derived from the carboxyl end of the proenzyme. The post-translation cleavage follows an unusual pathway, termed non-hydrolytic serinolysis, in which the side chain hydroxyl group of the serine supplies its oxygen atom to form the C-terminus of the beta chain, while the remainder of the serine residue undergoes an oxidative deamination to produce ammonia and the pyruvoyl prosthetic group on the alpha chain.

The protein resides in the cell membrane. The catalysed reaction is a 1,2-diacyl-sn-glycero-3-phospho-L-serine + H(+) = a 1,2-diacyl-sn-glycero-3-phosphoethanolamine + CO2. It functions in the pathway phospholipid metabolism; phosphatidylethanolamine biosynthesis; phosphatidylethanolamine from CDP-diacylglycerol: step 2/2. Its function is as follows. Catalyzes the formation of phosphatidylethanolamine (PtdEtn) from phosphatidylserine (PtdSer). The chain is Phosphatidylserine decarboxylase proenzyme from Nitrobacter winogradskyi (strain ATCC 25391 / DSM 10237 / CIP 104748 / NCIMB 11846 / Nb-255).